The primary structure comprises 261 residues: Imidazole glycerol phosphate synthase subunit HisF (261 aa).

Active-site residues include aspartate 12 and aspartate 131.

It belongs to the HisA/HisF family. Heterodimer of HisH and HisF.

It is found in the cytoplasm. It carries out the reaction 5-[(5-phospho-1-deoxy-D-ribulos-1-ylimino)methylamino]-1-(5-phospho-beta-D-ribosyl)imidazole-4-carboxamide + L-glutamine = D-erythro-1-(imidazol-4-yl)glycerol 3-phosphate + 5-amino-1-(5-phospho-beta-D-ribosyl)imidazole-4-carboxamide + L-glutamate + H(+). Its pathway is amino-acid biosynthesis; L-histidine biosynthesis; L-histidine from 5-phospho-alpha-D-ribose 1-diphosphate: step 5/9. IGPS catalyzes the conversion of PRFAR and glutamine to IGP, AICAR and glutamate. The HisF subunit catalyzes the cyclization activity that produces IGP and AICAR from PRFAR using the ammonia provided by the HisH subunit. This Brucella anthropi (strain ATCC 49188 / DSM 6882 / CCUG 24695 / JCM 21032 / LMG 3331 / NBRC 15819 / NCTC 12168 / Alc 37) (Ochrobactrum anthropi) protein is Imidazole glycerol phosphate synthase subunit HisF.